A 126-amino-acid chain; its full sequence is Prostate and testis expressed protein 1 (126 aa).

Positions 1-21 (MDKSLLLELPILLCCFRALSG) are cleaved as a signal peptide. Positions 46–125 (VQCRMCHLQF…CRSHDLCNED (80 aa)) constitute a UPAR/Ly6 domain. Disulfide bonds link Cys48/Cys75, Cys51/Cys60, Cys67/Cys94, and Cys98/Cys115.

Belongs to the PATE family. In terms of tissue distribution, expressed specifically in prostate cancer, normal prostate, and testis. Expressed in the epithelial cells of the prostate cancer and normal prostate tissues.

The protein resides in the secreted. This is Prostate and testis expressed protein 1 (PATE1) from Homo sapiens (Human).